The chain runs to 30 residues: Cytochrome b6/f complex 12.6 kDa peptide (30 aa).

The interval 1 to 30 (SGSGVRSAKKGGKAQGGQAGVGYKGSTEPG) is disordered. Gly residues predominate over residues 13-23 (KAQGGQAGVGY).

Its subcellular location is the plastid. It is found in the chloroplast. Its function is as follows. May be a component of the cytochrome b6/f complex which is part of the photosynthetic respiratory chain. The sequence is that of Cytochrome b6/f complex 12.6 kDa peptide from Euglena gracilis.